Here is a 117-residue protein sequence, read N- to C-terminus: Prefoldin subunit beta (117 aa).

The protein belongs to the prefoldin subunit beta family. As to quaternary structure, heterohexamer of two alpha and four beta subunits.

The protein resides in the cytoplasm. Its function is as follows. Molecular chaperone capable of stabilizing a range of proteins. Seems to fulfill an ATP-independent, HSP70-like function in archaeal de novo protein folding. This is Prefoldin subunit beta from Thermococcus gammatolerans (strain DSM 15229 / JCM 11827 / EJ3).